A 769-amino-acid polypeptide reads, in one-letter code: Serine/threonine-protein kinase PLK4 (769 aa).

The Protein kinase domain maps to 14–267 (YEVQHLLGKG…LEAVLCHPFM (254 aa)). ATP is bound by residues 20 to 28 (LGKGGFATV) and lysine 43. The Proton acceptor role is filled by aspartate 138. Residues 381 to 498 (EDRISVPPLN…ARFVGLVKSK (118 aa)) enclose the Cryptic POLO box 1 (CPB1) domain. In terms of domain architecture, Cryptic POLO box 2 (CPB2) spans 499 to 602 (TPKVTYFSTL…GRRPITDVQP (104 aa)). The POLO box domain maps to 660-739 (PIKRINVPDI…IPNIQLKLKT (80 aa)).

The protein belongs to the protein kinase superfamily. Ser/Thr protein kinase family. CDC5/Polo subfamily. As to quaternary structure, homodimer. In terms of processing, ubiquitinated by the SCF(Slimb) ubiquitin ligase complex; leading to its degradation by the proteasome during interphase and regulating centriole number and ensuring the block to centriole reduplication.

Its subcellular location is the cytoplasm. It localises to the cytoskeleton. It is found in the microtubule organizing center. The protein resides in the centrosome. The protein localises to the centriole. It catalyses the reaction L-seryl-[protein] + ATP = O-phospho-L-seryl-[protein] + ADP + H(+). The enzyme catalyses L-threonyl-[protein] + ATP = O-phospho-L-threonyl-[protein] + ADP + H(+). Its function is as follows. Serine/threonine-protein kinase that plays a central role in centriole duplication. Able to trigger procentriole formation on the surface of the mother centriole cylinder, using mother centriole as a platform, leading to the recruitment of centriole biogenesis proteins such as sas-6. When overexpressed, it is able to induce centrosome amplification through the simultaneous generation of multiple procentrioles adjoining each parental centriole during S phase. Centrosome amplification following overexpression can initiate tumorigenesis, highlighting the importance of centrosome regulation in cancers. The protein is Serine/threonine-protein kinase PLK4 (SAK) of Drosophila simulans (Fruit fly).